The following is a 263-amino-acid chain: 3-deoxy-manno-octulosonate cytidylyltransferase (263 aa).

This sequence belongs to the KdsB family.

Its subcellular location is the cytoplasm. It catalyses the reaction 3-deoxy-alpha-D-manno-oct-2-ulosonate + CTP = CMP-3-deoxy-beta-D-manno-octulosonate + diphosphate. It participates in nucleotide-sugar biosynthesis; CMP-3-deoxy-D-manno-octulosonate biosynthesis; CMP-3-deoxy-D-manno-octulosonate from 3-deoxy-D-manno-octulosonate and CTP: step 1/1. Its pathway is bacterial outer membrane biogenesis; lipopolysaccharide biosynthesis. Its function is as follows. Activates KDO (a required 8-carbon sugar) for incorporation into bacterial lipopolysaccharide in Gram-negative bacteria. This Burkholderia cenocepacia (strain HI2424) protein is 3-deoxy-manno-octulosonate cytidylyltransferase.